Consider the following 193-residue polypeptide: Interleukin-18 (193 aa).

Residues 1–36 constitute a propeptide that is removed on maturation; the sequence is MAAEPVEDNCINFVAMKFIDNTLYFIAEDDENLESD.

It belongs to the IL-1 family. As to quaternary structure, forms a ternary complex with ligand-binding receptor subunit IL18R1 and signaling receptor subunit IL18RAP at the plasma membrane. Mature IL18 first binds to IL18R1 forming a low affinity binary complex, which then interacts with IL18RAP to form a high affinity ternary complex that signals inside the cell. Interacts with cargo receptor TMED10; the interaction mediates the translocation from the cytoplasm into the ERGIC (endoplasmic reticulum-Golgi intermediate compartment) and thereby secretion. The pro-IL-18 precursor is processed by CASP1, CASP4 or CASP5 to yield its mature, active form. The pro-IL-18 precursor features autoinhibitory interactions between the propeptide and the post-cleavage-site region, preventing recognition by the IL18R1 receptor. Processing by CASP1, CASP4 or CASP5 induces conformational changes to generate critical receptor-binding sites. The mature form is then secreted and released in the extracellular milieu by passing through the gasdermin-D (GSDMD) pore. In contrast, cleavage by CASP3 inactivates IL18. Expressed in ovarian carcinoma but undetectable in normal ovarian epithelial cells. Resistant to proteolytic activation by caspase-1 and -4.

The protein localises to the cytoplasm. Its subcellular location is the cytosol. It is found in the secreted. Pro-inflammatory cytokine primarily involved in epithelial barrier repair, polarized T-helper 1 (Th1) cell and natural killer (NK) cell immune responses. Upon binding to IL18R1 and IL18RAP, forms a signaling ternary complex which activates NF-kappa-B, triggering synthesis of inflammatory mediators. Synergizes with IL12/interleukin-12 to induce IFNG synthesis from T-helper 1 (Th1) cells and natural killer (NK) cells. Involved in transduction of inflammation downstream of pyroptosis: its mature form is specifically released in the extracellular milieu by passing through the gasdermin-D (GSDMD) pore. This is Interleukin-18 from Homo sapiens (Human).